Reading from the N-terminus, the 218-residue chain is Adenylate kinase (218 aa).

10–15 (GAGKGT) serves as a coordination point for ATP. The segment at 30–59 (STGDMLRAAVKAGTPLGLQAKAVMDSGSLV) is NMP. Residues Thr31, Arg36, 57 to 59 (SLV), 85 to 88 (GFPR), and Gln92 each bind AMP. The LID stretch occupies residues 122 to 159 (GRRSHPASGRTYHVRFNPPKIDGKDDLTGEALLQREDD). ATP is bound by residues Arg123 and 132 to 133 (TY). AMP contacts are provided by Arg156 and Arg167. Gly203 is an ATP binding site.

The protein belongs to the adenylate kinase family. As to quaternary structure, monomer.

The protein localises to the cytoplasm. The enzyme catalyses AMP + ATP = 2 ADP. The protein operates within purine metabolism; AMP biosynthesis via salvage pathway; AMP from ADP: step 1/1. In terms of biological role, catalyzes the reversible transfer of the terminal phosphate group between ATP and AMP. Plays an important role in cellular energy homeostasis and in adenine nucleotide metabolism. In Verminephrobacter eiseniae (strain EF01-2), this protein is Adenylate kinase.